The primary structure comprises 445 residues: Na(+)-translocating NADH-quinone reductase subunit A (445 aa).

This sequence belongs to the NqrA family. In terms of assembly, composed of six subunits; NqrA, NqrB, NqrC, NqrD, NqrE and NqrF.

The catalysed reaction is a ubiquinone + n Na(+)(in) + NADH + H(+) = a ubiquinol + n Na(+)(out) + NAD(+). In terms of biological role, NQR complex catalyzes the reduction of ubiquinone-1 to ubiquinol by two successive reactions, coupled with the transport of Na(+) ions from the cytoplasm to the periplasm. NqrA to NqrE are probably involved in the second step, the conversion of ubisemiquinone to ubiquinol. In Teredinibacter turnerae (strain ATCC 39867 / T7901), this protein is Na(+)-translocating NADH-quinone reductase subunit A.